A 51-amino-acid polypeptide reads, in one-letter code: Conotoxin Cal6.33 (51 aa).

Positions 1-22 are cleaved as a signal peptide; sequence MKLTCVVIIAVLILTACQFTTA. Cystine bridges form between C25-C39, C32-C43, and C38-C50.

It belongs to the conotoxin O1 superfamily. In terms of tissue distribution, expressed by the venom duct.

Its subcellular location is the secreted. Probable neurotoxin. This chain is Conotoxin Cal6.33, found in Californiconus californicus (California cone).